Reading from the N-terminus, the 256-residue chain is Acetylglutamate kinase (256 aa).

Residues 40–41 (GG), arginine 62, and asparagine 154 contribute to the substrate site.

Belongs to the acetylglutamate kinase family. ArgB subfamily.

It localises to the cytoplasm. It carries out the reaction N-acetyl-L-glutamate + ATP = N-acetyl-L-glutamyl 5-phosphate + ADP. It participates in amino-acid biosynthesis; L-arginine biosynthesis; N(2)-acetyl-L-ornithine from L-glutamate: step 2/4. Functionally, catalyzes the ATP-dependent phosphorylation of N-acetyl-L-glutamate. The sequence is that of Acetylglutamate kinase from Staphylococcus aureus (strain MRSA252).